The primary structure comprises 393 residues: tRNA(Met) cytidine acetate ligase (393 aa).

Residues glycine 81, asparagine 142, and arginine 167 each contribute to the ATP site.

The protein belongs to the TmcAL family.

It localises to the cytoplasm. It catalyses the reaction cytidine(34) in elongator tRNA(Met) + acetate + ATP = N(4)-acetylcytidine(34) in elongator tRNA(Met) + AMP + diphosphate. Functionally, catalyzes the formation of N(4)-acetylcytidine (ac(4)C) at the wobble position of elongator tRNA(Met), using acetate and ATP as substrates. First activates an acetate ion to form acetyladenylate (Ac-AMP) and then transfers the acetyl group to tRNA to form ac(4)C34. The chain is tRNA(Met) cytidine acetate ligase from Bacillus cereus (strain AH820).